A 321-amino-acid polypeptide reads, in one-letter code: Phospho-N-acetylmuramoyl-pentapeptide-transferase (321 aa).

10 helical membrane-spanning segments follow: residues 1-21 (MLFI…PILI), 50-70 (MGGL…IFFV), 76-96 (IILL…DDYI), 112-132 (FLAQ…FHLV), 140-160 (IPFT…IVFW), 176-196 (GLAT…SFVL), 200-220 (AIGA…PYNL), 225-245 (VFMG…ISIM), 250-270 (LSLL…MLQV), and 300-320 (VVTV…WIGV).

It belongs to the glycosyltransferase 4 family. MraY subfamily. Mg(2+) is required as a cofactor.

It is found in the cell membrane. The enzyme catalyses UDP-N-acetyl-alpha-D-muramoyl-L-alanyl-gamma-D-glutamyl-L-lysyl-D-alanyl-D-alanine + di-trans,octa-cis-undecaprenyl phosphate = Mur2Ac(oyl-L-Ala-gamma-D-Glu-L-Lys-D-Ala-D-Ala)-di-trans,octa-cis-undecaprenyl diphosphate + UMP. Its pathway is cell wall biogenesis; peptidoglycan biosynthesis. Catalyzes the initial step of the lipid cycle reactions in the biosynthesis of the cell wall peptidoglycan: transfers peptidoglycan precursor phospho-MurNAc-pentapeptide from UDP-MurNAc-pentapeptide onto the lipid carrier undecaprenyl phosphate, yielding undecaprenyl-pyrophosphoryl-MurNAc-pentapeptide, known as lipid I. The polypeptide is Phospho-N-acetylmuramoyl-pentapeptide-transferase (Staphylococcus haemolyticus (strain JCSC1435)).